Reading from the N-terminus, the 181-residue chain is Squamosa promoter-binding-like protein 5 (181 aa).

Residues 1–10 (MEGQRTQRRG) are compositionally biased toward basic residues. A disordered region spans residues 1-58 (MEGQRTQRRGYLKDKATVSNLVEEEMENGMDGEEEDGGDEDKRKKVMERVRGPSTDRV). Positions 22–39 (VEEEMENGMDGEEEDGGD) are enriched in acidic residues. Basic and acidic residues predominate over residues 40 to 51 (EDKRKKVMERVR). Residues 60–137 (SRLCQVDRCT…AGHNERRRKI (78 aa)) form an SBP-type zinc finger. Zn(2+) contacts are provided by cysteine 63, cysteine 68, cysteine 85, histidine 88, cysteine 104, cysteine 107, histidine 111, and cysteine 123. The short motif at 120 to 136 (KRSCRRRLAGHNERRRK) is the Bipartite nuclear localization signal element. Residues 128–181 (AGHNERRRKISGDSFGEGSGRRGFSGQLIQTQERNRVDRKLPMTNSSFKRPQIR) are disordered. Residues 170 to 181 (MTNSSFKRPQIR) are compositionally biased toward polar residues.

The cofactor is Zn(2+). As to expression, expressed in the inflorescence apical meristem and young flowers.

It is found in the nucleus. Its subcellular location is the cytoplasm. Its function is as follows. Trans-acting factor that binds specifically to the consensus nucleotide sequence 5'-TNCGTACAA-3' of AP1 promoter. Promotes both vegetative phase change and flowering. The chain is Squamosa promoter-binding-like protein 5 (SPL5) from Arabidopsis thaliana (Mouse-ear cress).